We begin with the raw amino-acid sequence, 619 residues long: Dihydroxy-acid dehydratase (619 aa).

A Mg(2+)-binding site is contributed by D81. [2Fe-2S] cluster is bound at residue C122. Mg(2+) contacts are provided by D123 and K124. Residue K124 is modified to N6-carboxylysine. Residue C195 participates in [2Fe-2S] cluster binding. Mg(2+) is bound at residue E491. S517 serves as the catalytic Proton acceptor.

This sequence belongs to the IlvD/Edd family. As to quaternary structure, homodimer. [2Fe-2S] cluster serves as cofactor. Requires Mg(2+) as cofactor.

The catalysed reaction is (2R)-2,3-dihydroxy-3-methylbutanoate = 3-methyl-2-oxobutanoate + H2O. It catalyses the reaction (2R,3R)-2,3-dihydroxy-3-methylpentanoate = (S)-3-methyl-2-oxopentanoate + H2O. The protein operates within amino-acid biosynthesis; L-isoleucine biosynthesis; L-isoleucine from 2-oxobutanoate: step 3/4. It functions in the pathway amino-acid biosynthesis; L-valine biosynthesis; L-valine from pyruvate: step 3/4. Functions in the biosynthesis of branched-chain amino acids. Catalyzes the dehydration of (2R,3R)-2,3-dihydroxy-3-methylpentanoate (2,3-dihydroxy-3-methylvalerate) into 2-oxo-3-methylpentanoate (2-oxo-3-methylvalerate) and of (2R)-2,3-dihydroxy-3-methylbutanoate (2,3-dihydroxyisovalerate) into 2-oxo-3-methylbutanoate (2-oxoisovalerate), the penultimate precursor to L-isoleucine and L-valine, respectively. The protein is Dihydroxy-acid dehydratase of Sphingopyxis alaskensis (strain DSM 13593 / LMG 18877 / RB2256) (Sphingomonas alaskensis).